The primary structure comprises 209 residues: Transcription factor 23 (209 aa).

Disordered regions lie at residues 1–20 (MSQE…GHNK) and 54–85 (LSRA…ARER). Basic and acidic residues predominate over residues 72–85 (GRSEASPENAARER). The bHLH domain maps to 75-127 (EASPENAARERTRVKTLRQAFLALQAALPAVPPDTKLSKLDVLVLATSYIAHL).

As to quaternary structure, forms inactive heterodimeric complex with TCF3. As to expression, highly expressed in the uterus (predominantly in myometrium), ovary, and testis. Expression in the uterus is higher in the diestrus phase than in the estrus phase and reaches a maximum at 7.5 dpc. Expression declines towards the time of delivery and returns to the non-pregnant level 4 days after delivery. Low expression seen in lung, heart, intestine, and spleen.

It localises to the nucleus. Functionally, inhibits E-box-mediated binding and transactivation of bHLH factors. Inhibitory effect is similar to that of ID proteins. Inhibits the formation of TCF3 and MYOD1 homodimers and heterodimers. Lacks DNA binding activity. May be involved in the regulation or modulation of smooth muscle contraction of the uterus during pregnancy and particularly around the time of delivery. Seems to play a role in the inhibition of myogenesis. The polypeptide is Transcription factor 23 (Tcf23) (Mus musculus (Mouse)).